Reading from the N-terminus, the 261-residue chain is Thiamine thiazole synthase (261 aa).

NAD(+) is bound by residues alanine 33, glutamate 52 to arginine 53, glycine 60, valine 124, and histidine 152 to aspartate 154. Fe cation is bound by residues aspartate 154 and histidine 169. NAD(+) is bound at residue isoleucine 219. Arginine 229 is a binding site for glycine.

The protein belongs to the THI4 family. Homooctamer; tetramer of dimers. Fe(2+) is required as a cofactor.

The catalysed reaction is hydrogen sulfide + glycine + NAD(+) = ADP-5-ethyl-4-methylthiazole-2-carboxylate + nicotinamide + 3 H2O + H(+). It functions in the pathway cofactor biosynthesis; thiamine diphosphate biosynthesis. Involved in the biosynthesis of the thiazole moiety of thiamine. Catalyzes the conversion of NAD and glycine to adenosine diphosphate 5-(2-hydroxyethyl)-4-methylthiazole-2-carboxylate (ADT), an adenylated thiazole intermediate, using free sulfide as a source of sulfur. The sequence is that of Thiamine thiazole synthase from Pyrobaculum aerophilum (strain ATCC 51768 / DSM 7523 / JCM 9630 / CIP 104966 / NBRC 100827 / IM2).